The chain runs to 327 residues: Zinc transport protein ZntB (327 aa).

Residues 1–271 lie on the Cytoplasmic side of the membrane; sequence MDVVAGKALQ…AMNRRTYTMS (271 aa). A helical membrane pass occupies residues 272 to 292; sequence LLAMVFLPTTFLTGLFGVNLG. The Periplasmic segment spans residues 293-300; that stretch reads GIPGNTDS. Residues 301–321 form a helical membrane-spanning segment; it reads FGFATFCMMLVVLVLGVAWWL. The Cytoplasmic portion of the chain corresponds to 322–327; that stretch reads KHSKWL.

Belongs to the CorA metal ion transporter (MIT) (TC 1.A.35) family.

It is found in the cell inner membrane. It carries out the reaction Zn(2+)(out) + H(+)(out) = Zn(2+)(in) + H(+)(in). Its function is as follows. Zinc transporter. Acts as a Zn(2+):proton symporter, which likely mediates zinc ion uptake. The sequence is that of Zinc transport protein ZntB from Yersinia enterocolitica serotype O:8 / biotype 1B (strain NCTC 13174 / 8081).